The sequence spans 2799 residues: Peramine synthetase ppzA (2799 aa).

The adenylation 1 stretch occupies residues 270 to 666 (QERCRLQPNA…VGRKDTQVKI (397 aa)). One can recognise a Carrier 1 domain in the interval 799–875 (QPLTGMERLL…DLSRQSRYIE (77 aa)). Position 836 is an O-(pantetheine 4'-phosphoryl)serine (S836). The tract at residues 914-1327 (DAYPCTPLQE…ITILTTEDLE (414 aa)) is condensation. The interval 1350-1743 (DKVQARPNAP…TLSFVRRKDT (394 aa)) is adenylation 2. Positions 1874-1970 (LEIGCGSGMM…EYLVKLIQDI (97 aa)) are methylation (Met) domain. Residues 2290–2368 (SPTTDMEKEL…RLLLDCCCDD (79 aa)) enclose the Carrier 2 domain. At S2327 the chain carries O-(pantetheine 4'-phosphoryl)serine. Residues 2420–2737 (TVLLTGANGF…LADMLQDLED (318 aa)) are thiesterase (TE) domain.

This sequence belongs to the NRP synthetase family. The cofactor is pantetheine 4'-phosphate.

The enzyme catalyses (S)-1-pyrroline-5-carboxylate + L-arginine + S-adenosyl-L-methionine + 2 ATP = peramine + 2 AMP + S-adenosyl-L-homocysteine + 2 diphosphate + H2O + 2 H(+). It functions in the pathway secondary metabolite biosynthesis. Its function is as follows. Nonribosomal peptide synthetase; part of the gene cluster that mediates the biosynthesis of pyrrolopyrazines, secondary metabolites showing insecticidal activity. The single multifunctional NRPS ppzA is responsible for the biosynthesis of peramine. The condensation domain of ppzA is proposed to catalyze formation of a peptide bond between 1-pyrroline-5-carboxylate and arginine. The methylation domain of ppzA would catalyze the N-methylation of the alpha-amino group of arginine. The reductase domain is proposed to be responsible for reduction of the thioester and the cyclization to form an iminium ion resulting in release from the peptide synthetase. Deprotonation of this intermediate and oxidation of the pyrroline ring would give rise to peramine. This final oxidation to give the pyrrole functionality may be spontaneous. In Epichloe species that produce only peramine, the peramine synthetase gene is not localized in a gene cluster, in contrast to Metarhizium species that contain additional pyrrolopyrazine biosynthesis genes. The 2-oxoglutarate-Fe(II) type oxidoreductase ppzC hydroxylates peramine to yield the newly identified compound 8-hydroxyperamine whereas ppzD converts L-proline into trans-4-hydroxy-L-proline, a precursor of peramine biosynthesis. The polypeptide is Peramine synthetase ppzA (Metarhizium majus (strain ARSEF 297)).